We begin with the raw amino-acid sequence, 241 residues long: Adenosylcobinamide-GDP ribazoletransferase (241 aa).

5 helical membrane passes run 24 to 44, 48 to 68, 103 to 123, 175 to 195, and 218 to 238; these read IVFF…SIFY, FINQ…IYGF, VVTF…FNSI, VIIL…FSLI, and IIGF…LISF.

This sequence belongs to the CobS family. Mg(2+) is required as a cofactor.

It is found in the cell membrane. The catalysed reaction is alpha-ribazole + adenosylcob(III)inamide-GDP = adenosylcob(III)alamin + GMP + H(+). It carries out the reaction alpha-ribazole 5'-phosphate + adenosylcob(III)inamide-GDP = adenosylcob(III)alamin 5'-phosphate + GMP + H(+). It participates in cofactor biosynthesis; adenosylcobalamin biosynthesis; adenosylcobalamin from cob(II)yrinate a,c-diamide: step 7/7. Functionally, joins adenosylcobinamide-GDP and alpha-ribazole to generate adenosylcobalamin (Ado-cobalamin). Also synthesizes adenosylcobalamin 5'-phosphate from adenosylcobinamide-GDP and alpha-ribazole 5'-phosphate. The sequence is that of Adenosylcobinamide-GDP ribazoletransferase from Picrophilus torridus (strain ATCC 700027 / DSM 9790 / JCM 10055 / NBRC 100828 / KAW 2/3).